The chain runs to 258 residues: Small ribosomal subunit protein uS2 (258 aa).

It belongs to the universal ribosomal protein uS2 family.

The polypeptide is Small ribosomal subunit protein uS2 (Leuconostoc citreum (strain KM20)).